Reading from the N-terminus, the 1030-residue chain is Exportin-T (1030 aa).

Belongs to the exportin family.

The protein resides in the nucleus. Its subcellular location is the cytoplasm. Its function is as follows. tRNA nucleus export receptor which facilitates tRNA translocation across the nuclear pore complex. Involved in pre-tRNA splicing, probably by affecting the interaction of pre-tRNA with splicing endonuclease. The chain is Exportin-T (los1) from Aspergillus niger (strain ATCC MYA-4892 / CBS 513.88 / FGSC A1513).